The chain runs to 207 residues: MVQLELKKDQIMKNKIIEALMYFQGDQGLSPEQVKEVFDLEKDQEGKKLLNDFMEFYNAREGGTKVFVFGEIYKIATIEPLKDYVSKLVSIVRYQKLSKAAIEVAGIVAYKQPITKSMINEIRGVASDQVVNTLLVKNLIEEVGISPTPGKPVLYGITNKFYDYFKIKSLQELPNLSEFDFVQSIDEEQEEEQSYEGFNLFSSQREN.

This sequence belongs to the ScpB family. In terms of assembly, homodimer. Homodimerization may be required to stabilize the binding of ScpA to the Smc head domains. Component of a cohesin-like complex composed of ScpA, ScpB and the Smc homodimer, in which ScpA and ScpB bind to the head domain of Smc. The presence of the three proteins is required for the association of the complex with DNA.

It localises to the cytoplasm. Functionally, participates in chromosomal partition during cell division. May act via the formation of a condensin-like complex containing Smc and ScpA that pull DNA away from mid-cell into both cell halves. This is Segregation and condensation protein B from Mycoplasmopsis pulmonis (strain UAB CTIP) (Mycoplasma pulmonis).